We begin with the raw amino-acid sequence, 757 residues long: Lysyl oxidase homolog 4 (757 aa).

Positions 1–25 are cleaved as a signal peptide; that stretch reads MMWPQPPTFSLFLLLLLSQAPSSRP. 4 SRCR domains span residues 33–134, 160–288, 312–412, and 422–530; these read LRLV…VVCH, VRLK…VSCV, VRLR…VRCN, and VRLA…VACM. 17 disulfide bridges follow: cysteine 59/cysteine 123, cysteine 72/cysteine 133, cysteine 103/cysteine 113, cysteine 192/cysteine 277, cysteine 205/cysteine 287, cysteine 252/cysteine 262, cysteine 337/cysteine 401, cysteine 350/cysteine 411, cysteine 381/cysteine 391, cysteine 451/cysteine 516, cysteine 464/cysteine 529, cysteine 498/cysteine 508, cysteine 559/cysteine 565, cysteine 611/cysteine 659, cysteine 643/cysteine 649, cysteine 671/cysteine 681, and cysteine 718/cysteine 732. The N-linked (GlcNAc...) asparagine glycan is linked to asparagine 199. Positions 534–737 are lysyl-oxidase like; that stretch reads PDLVMNAQLV…WLHNCHTGDS (204 aa). 3 residues coordinate Cu cation: histidine 612, histidine 614, and histidine 616. N-linked (GlcNAc...) asparagine glycosylation occurs at asparagine 630. Positions 639–675 form a cross-link, lysine tyrosylquinone (Lys-Tyr); the sequence is KASFCLEDTNCPSGVQRRYACANFGEQGVAVGCWDTY. Tyrosine 675 bears the 2',4',5'-topaquinone mark.

The protein belongs to the lysyl oxidase family. It depends on Cu cation as a cofactor. Lysine tyrosylquinone residue is required as a cofactor. In terms of processing, the lysine tyrosylquinone cross-link (LTQ) is generated by condensation of the epsilon-amino group of a lysine with a topaquinone produced by oxidation of tyrosine. Post-translationally, may be proteolytically cleaved by BMP1.

The protein resides in the secreted. Its subcellular location is the extracellular space. The catalysed reaction is L-lysyl-[protein] + O2 + H2O = (S)-2-amino-6-oxohexanoyl-[protein] + H2O2 + NH4(+). Catalyzes the oxidative deamination of lysine and hydroxylysine residues in collagen and elastin, resulting in the formation of covalent cross-linkages, and the stabilization of collagen and elastin fibers. The polypeptide is Lysyl oxidase homolog 4 (Loxl4) (Mus musculus (Mouse)).